We begin with the raw amino-acid sequence, 351 residues long: Photosystem II D2 protein (351 aa).

A helical transmembrane segment spans residues 39-59 (CAFLALGGWLTGTTFVTSWYT). A chlorophyll a-binding site is contributed by His116. A helical transmembrane segment spans residues 123–139 (GFMLRQFEIARLVGIRP). Residues Gln128 and Asn141 each coordinate pheophytin a. The chain crosses the membrane as a helical span at residues 151-164 (VFVSVFLMYPLGQS). His196 serves as a coordination point for chlorophyll a. The chain crosses the membrane as a helical span at residues 206-226 (GALLCAIHGATVENTLFEDGD). His213 and Phe260 together coordinate a plastoquinone. His213 is a binding site for Fe cation. His267 is a binding site for Fe cation. A helical transmembrane segment spans residues 277-293 (GLWMSAVGIVGLALNLR).

This sequence belongs to the reaction center PufL/M/PsbA/D family. PSII is composed of 1 copy each of membrane proteins PsbA, PsbB, PsbC, PsbD, PsbE, PsbF, PsbH, PsbI, PsbJ, PsbK, PsbL, PsbM, PsbT, PsbX, PsbY, PsbZ, Psb30/Ycf12, peripheral proteins PsbO, CyanoQ (PsbQ), PsbU, PsbV and a large number of cofactors. It forms dimeric complexes. The cofactor is The D1/D2 heterodimer binds P680, chlorophylls that are the primary electron donor of PSII, and subsequent electron acceptors. It shares a non-heme iron and each subunit binds pheophytin, quinone, additional chlorophylls, carotenoids and lipids. There is also a Cl(-1) ion associated with D1 and D2, which is required for oxygen evolution. The PSII complex binds additional chlorophylls, carotenoids and specific lipids..

The protein resides in the cellular thylakoid membrane. The enzyme catalyses 2 a plastoquinone + 4 hnu + 2 H2O = 2 a plastoquinol + O2. In terms of biological role, photosystem II (PSII) is a light-driven water:plastoquinone oxidoreductase that uses light energy to abstract electrons from H(2)O, generating O(2) and a proton gradient subsequently used for ATP formation. It consists of a core antenna complex that captures photons, and an electron transfer chain that converts photonic excitation into a charge separation. The D1/D2 (PsbA/PsbD) reaction center heterodimer binds P680, the primary electron donor of PSII as well as several subsequent electron acceptors. D2 is needed for assembly of a stable PSII complex. The chain is Photosystem II D2 protein from Nostoc punctiforme (strain ATCC 29133 / PCC 73102).